Consider the following 261-residue polypeptide: tRNA (guanine-N(1)-)-methyltransferase (261 aa).

Residues G113 and 133-138 (IGDYVL) each bind S-adenosyl-L-methionine.

The protein belongs to the RNA methyltransferase TrmD family. As to quaternary structure, homodimer.

It localises to the cytoplasm. The catalysed reaction is guanosine(37) in tRNA + S-adenosyl-L-methionine = N(1)-methylguanosine(37) in tRNA + S-adenosyl-L-homocysteine + H(+). Its function is as follows. Specifically methylates guanosine-37 in various tRNAs. The protein is tRNA (guanine-N(1)-)-methyltransferase of Xylella fastidiosa (strain M23).